A 463-amino-acid chain; its full sequence is Argininosuccinate lyase (463 aa).

Belongs to the lyase 1 family. Argininosuccinate lyase subfamily.

It is found in the cytoplasm. The enzyme catalyses 2-(N(omega)-L-arginino)succinate = fumarate + L-arginine. The protein operates within amino-acid biosynthesis; L-arginine biosynthesis; L-arginine from L-ornithine and carbamoyl phosphate: step 3/3. The sequence is that of Argininosuccinate lyase from Chlorobaculum tepidum (strain ATCC 49652 / DSM 12025 / NBRC 103806 / TLS) (Chlorobium tepidum).